We begin with the raw amino-acid sequence, 291 residues long: ATP synthase gamma chain (291 aa).

The protein belongs to the ATPase gamma chain family. F-type ATPases have 2 components, CF(1) - the catalytic core - and CF(0) - the membrane proton channel. CF(1) has five subunits: alpha(3), beta(3), gamma(1), delta(1), epsilon(1). CF(0) has three main subunits: a, b and c.

It is found in the cell inner membrane. Produces ATP from ADP in the presence of a proton gradient across the membrane. The gamma chain is believed to be important in regulating ATPase activity and the flow of protons through the CF(0) complex. This Burkholderia cenocepacia (strain ATCC BAA-245 / DSM 16553 / LMG 16656 / NCTC 13227 / J2315 / CF5610) (Burkholderia cepacia (strain J2315)) protein is ATP synthase gamma chain.